The chain runs to 371 residues: Vasopressin V2 receptor (371 aa).

A disordered region spans residues 1-27; the sequence is MILVSTTSAVPGALSSPSSPSNSSQEE. Topologically, residues 1-38 are extracellular; sequence MILVSTTSAVPGALSSPSSPSNSSQEELLDDRDPLLVR. The span at 15–24 shows a compositional bias: low complexity; that stretch reads SSPSSPSNSS. Asparagine 22 carries an N-linked (GlcNAc...) asparagine glycan. Residues 39–63 traverse the membrane as a helical segment; sequence AELALLSTIFVAVALSNGLVLGALI. At 64 to 77 the chain is on the cytoplasmic side; sequence RRGRRGRWAPMHVF. A helical transmembrane segment spans residues 78 to 98; that stretch reads ISHLCLADLAVALFQVLPQLA. At 99 to 113 the chain is on the extracellular side; the sequence is WDATDRFHGPDALCR. The chain crosses the membrane as a helical span at residues 114–135; it reads AVKYLQMVGMYASSYMILAMTL. Residues 136–159 are Cytoplasmic-facing; it reads DRHRAICRPMLAYRHGGGARWNRP. The chain crosses the membrane as a helical span at residues 160–180; that stretch reads VLVAWAFSLLLSLPQLFIFAQ. Residues 181-200 are Extracellular-facing; the sequence is RDVGNGSGVFDCWARFAEPW. Asparagine 185 carries N-linked (GlcNAc...) asparagine glycosylation. The helical transmembrane segment at 201–220 threads the bilayer; that stretch reads GLRAYVTWIALMVFVAPALG. Residues 221–271 lie on the Cytoplasmic side of the membrane; it reads IAACQVLIFREIHASLVPGPSERAGRRRRGHRTGSPSEGAHVSAAMAKTVR. The segment at 240–259 is disordered; that stretch reads PSERAGRRRRGHRTGSPSEG. The helical transmembrane segment at 272-293 threads the bilayer; the sequence is MTLVIVIVYVLCWAPFFLVQLW. Topologically, residues 294 to 308 are extracellular; the sequence is AAWDPEAPLERPPFV. Residues 309–328 traverse the membrane as a helical segment; it reads LLMLLASLNSCTNPWIYASF. Over 329–371 the chain is Cytoplasmic; the sequence is SSSVSSELRSLLCCAQRHTTHSLGPQDESCATASSSLMKDTPS. S-palmitoyl cysteine attachment occurs at residues cysteine 341 and cysteine 342. Residues 349–371 are disordered; that stretch reads HSLGPQDESCATASSSLMKDTPS. The segment covering 357–371 has biased composition (polar residues); that stretch reads SCATASSSLMKDTPS.

This sequence belongs to the G-protein coupled receptor 1 family. Vasopressin/oxytocin receptor subfamily. As to quaternary structure, interacts with ARRDC4. Identified in a complex containing at least ARRDC4, V2R and HGS. Interacts with TMEM147. Highly expressed in kidney (at protein level) and moderately expressed in liver (at protein level). No or extremely low expression in left ventricule, muscle, bone and brain (at protein level).

The protein resides in the cell membrane. In terms of biological role, receptor for arginine vasopressin. The activity of this receptor is mediated by G proteins which activate adenylate cyclase. Involved in renal water reabsorption. This Mus musculus (Mouse) protein is Vasopressin V2 receptor (Avpr2).